A 259-amino-acid polypeptide reads, in one-letter code: Phosphate import ATP-binding protein PstB 1 (259 aa).

Positions 13–254 constitute an ABC transporter domain; that stretch reads IETKDVDLFY…PAEKETEDYI (242 aa). 45–52 is a binding site for ATP; it reads GPSGCGKS.

Belongs to the ABC transporter superfamily. Phosphate importer (TC 3.A.1.7) family. The complex is composed of two ATP-binding proteins (PstB), two transmembrane proteins (PstC and PstA) and a solute-binding protein (PstS).

It is found in the cell membrane. It carries out the reaction phosphate(out) + ATP + H2O = ADP + 2 phosphate(in) + H(+). Functionally, part of the ABC transporter complex PstSACB involved in phosphate import. Responsible for energy coupling to the transport system. The chain is Phosphate import ATP-binding protein PstB 1 from Listeria innocua serovar 6a (strain ATCC BAA-680 / CLIP 11262).